The following is a 223-amino-acid chain: Deoxyribose-phosphate aldolase (223 aa).

The Proton donor/acceptor role is filled by aspartate 92. Lysine 154 serves as the catalytic Schiff-base intermediate with acetaldehyde. The active-site Proton donor/acceptor is the lysine 182.

It belongs to the DeoC/FbaB aldolase family. DeoC type 1 subfamily.

The protein localises to the cytoplasm. It carries out the reaction 2-deoxy-D-ribose 5-phosphate = D-glyceraldehyde 3-phosphate + acetaldehyde. It participates in carbohydrate degradation; 2-deoxy-D-ribose 1-phosphate degradation; D-glyceraldehyde 3-phosphate and acetaldehyde from 2-deoxy-alpha-D-ribose 1-phosphate: step 2/2. Catalyzes a reversible aldol reaction between acetaldehyde and D-glyceraldehyde 3-phosphate to generate 2-deoxy-D-ribose 5-phosphate. The sequence is that of Deoxyribose-phosphate aldolase from Haemophilus influenzae (strain 86-028NP).